We begin with the raw amino-acid sequence, 741 residues long: Protein ACCUMULATION AND REPLICATION OF CHLOROPLASTS 3, chloroplastic (741 aa).

A chloroplast-targeting transit peptide spans 1 to 41 (MPISMELPVFSTLRVPLFSRLALLPTFGVPFSSLGATTRLN). 2 disordered regions span residues 444 to 465 (ENGD…SRLD) and 539 to 558 (DSRE…SSDT). Over residues 451–465 (YPLKEGEPSRNSRLD) the composition is skewed to basic and acidic residues. The segment covering 546 to 558 (FNPNGSTKDSSDT) has biased composition (polar residues). MORN repeat units follow at residues 612–628 (QGGL…GDGS), 630–652 (YDGM…NGDV), and 653–675 (FQGT…KGDR).

In terms of assembly, self-interacts. Interacts with FTSZ, CDP1/PARC6 (via N-terminus), MIND1 and MINE1. Part of a complex made of ARC3, ARC6, FTSZ1 and FTSZ2. Recruited to the middle of the plastid by CDP1/PARC6 where subsequent complex made of CDP1/PARC6, ARC3 and FtsZ proteins can form; this complex enhances the dynamics of Z rings during chloroplast division. Binding to FTSZ2-1 is enabled by ARC6.

It localises to the plastid. The protein resides in the chloroplast outer membrane. It is found in the chloroplast stroma. Functionally, together with MIND1 and MCD1, regulates FtsZ ring positioning in chloroplasts in an ARC6-dependent manner. Z-ring accessory protein involved in the initiation of plastid division and division site placement (might functionally replace bacterial MinC). Acts as a disassembly factor that accelerates fragmentation and depolymerization of existing FtsZ2 filaments by enhancing FTSZ2 GTPase activity, thus leading to the conversion of FTSZ2 bound GTP into GDP, a process which triggers FtsZ2 filaments destabilization. Prevents misplaced Z-ring formation at chloroplast stroma nondivision sites. May control the rate of chloroplast expansion. Seems to influence stromule (stroma-filled tubular extensions of the plastid envelope membrane) length and frequency. The sequence is that of Protein ACCUMULATION AND REPLICATION OF CHLOROPLASTS 3, chloroplastic from Arabidopsis thaliana (Mouse-ear cress).